The sequence spans 147 residues: Ponticulin-like protein C5 (147 aa).

An N-terminal signal peptide occupies residues Met-1–Ala-20. A lipid anchor (GPI-like-anchor amidated asparagine) is attached at Asn-118. Asn-118 carries N-linked (GlcNAc...) asparagine glycosylation. Residues Ser-119 to Leu-147 constitute a propeptide, removed in mature form.

The protein belongs to the ponticulin family. In terms of processing, the GPI-like-anchor contains a phosphoceramide group, rather than a phosphatidyl group.

It is found in the cell membrane. This is Ponticulin-like protein C5 (ponC5) from Dictyostelium discoideum (Social amoeba).